Consider the following 870-residue polypeptide: NEDD4-like E3 ubiquitin-protein ligase WWP2 (870 aa).

A C2 domain is found at 1–117 (MASASSSRAG…KNNGGKMENT (117 aa)). The tract at residues 150–300 (SVPNGSAVTD…QLPAAAQAPD (151 aa)) is disordered. A compositionally biased stretch (polar residues) spans 152-171 (PNGSAVTDGSQPPSRESSGT). Residues 198-208 (GGSARTATAAS) show a composition bias toward low complexity. Serine 211 is modified (phosphoserine). Composition is skewed to polar residues over residues 222 to 235 (VKNSSSSGLANGTV) and 262 to 289 (SVSSNPNTTSLPAQSTPAEGEEASTSGT). Residues 290-300 (QQLPAAAQAPD) are compositionally biased toward low complexity. 4 WW domains span residues 300–333 (DALPAGWEQRELPNGRVYYVDHNTKTTTWERPLP), 330–363 (RPLPPGWEKRTDPRGRFYYVDHNTRTTTWQRPTA), 405–437 (GPLPPGWEKRQDNGRVYYVNHNTRTTQWEDPRT), and 444–477 (PALPPGWEMKYTSEGVRYFVDHNTRTTTFKDPRP). The HECT domain maps to 536-870 (KPYDLRRRLY…IEETEGFGQE (335 aa)). Cysteine 838 acts as the Glycyl thioester intermediate in catalysis.

In terms of assembly, interacts with SCNN1A, SCNN1B, SCNN1G, WBP1, WBP2 and ATN1. Interacts with ERBB4, NDFIP1 and NDFIP2. Interacts with ARRDC4. Interacts with POU5F1, RBP1, EGR2 and SLC11A2. Interacts (via WW domains) with ARRDC1 (via PPxY motifs); ubiquitinates ARRDC1. Interacts (via WW domains) with ARRDC2 and ARRDC3. Post-translationally, autoubiquitinated. Ubiquitinated by the SCF(FBXL15) complex, leading to its degradation by the proteasome.

The protein localises to the nucleus. The enzyme catalyses S-ubiquitinyl-[E2 ubiquitin-conjugating enzyme]-L-cysteine + [acceptor protein]-L-lysine = [E2 ubiquitin-conjugating enzyme]-L-cysteine + N(6)-ubiquitinyl-[acceptor protein]-L-lysine.. It participates in protein modification; protein ubiquitination. Its activity is regulated as follows. Activated by NDFIP1- and NDFIP2-binding. E3 ubiquitin-protein ligase which accepts ubiquitin from an E2 ubiquitin-conjugating enzyme in the form of a thioester and then directly transfers the ubiquitin to targeted substrates. Polyubiquitinates POU5F1 by 'Lys-63'-linked conjugation and promotes it to proteasomal degradation; regulates POU5F1 protein level during differentiation of embryonal carcinoma cells (ECCs) but not in undifferentiated ECCs and embryonic stem cells (ESCs). Ubiquitinates EGR2 and promotes it to proteasomal degradation; in T-cells the ubiquitination inhibits activation-induced cell death. Ubiquitinates SLC11A2; the ubiquitination is enhanced by presence of NDFIP1 and NDFIP2. Ubiquitinates RPB1 and promotes it to proteasomal degradation. The polypeptide is NEDD4-like E3 ubiquitin-protein ligase WWP2 (Wwp2) (Mus musculus (Mouse)).